The chain runs to 156 residues: Small ribosomal subunit protein uS7 (156 aa).

It belongs to the universal ribosomal protein uS7 family. In terms of assembly, part of the 30S ribosomal subunit. Contacts proteins S9 and S11.

One of the primary rRNA binding proteins, it binds directly to 16S rRNA where it nucleates assembly of the head domain of the 30S subunit. Is located at the subunit interface close to the decoding center, probably blocks exit of the E-site tRNA. The chain is Small ribosomal subunit protein uS7 from Mycobacterium ulcerans (strain Agy99).